The primary structure comprises 367 residues: Dual specificity protein phosphatase 1 (367 aa).

The region spanning 20-137 is the Rhodanese domain; sequence GAAQCLLLDC…FSASCPELCS (118 aa). Residues 173–314 enclose the Tyrosine-protein phosphatase domain; sequence GPVEILSFLY…LLQFESQVLA (142 aa). The Phosphocysteine intermediate role is filled by C258. A phosphoserine; by MAPK1 and MAPK3 mark is found at S359 and S364.

The protein belongs to the protein-tyrosine phosphatase family. Non-receptor class dual specificity subfamily. Phosphorylation at Ser-359 and Ser-364 by MAPK1/ERK2 and MAPK3/ERK1 reduces its rate of degradation. Post-translationally, 'Lys-48'-linked polyubiquitinated by NEURL3, leading to proteasomal degradation.

The protein localises to the nucleus. It carries out the reaction O-phospho-L-tyrosyl-[protein] + H2O = L-tyrosyl-[protein] + phosphate. The enzyme catalyses O-phospho-L-seryl-[protein] + H2O = L-seryl-[protein] + phosphate. It catalyses the reaction O-phospho-L-threonyl-[protein] + H2O = L-threonyl-[protein] + phosphate. In terms of biological role, dual specificity phosphatase that dephosphorylates MAP kinase MAPK1/ERK2 on both 'Thr-183' and 'Tyr-185', regulating its activity during the meiotic cell cycle. In Mus musculus (Mouse), this protein is Dual specificity protein phosphatase 1.